The following is a 210-amino-acid chain: Cdc42 effector protein 2 (210 aa).

At S2 the chain carries N-acetylserine. Residues 30–44 enclose the CRIB domain; it reads ISPPLGDFRHTIHIG. S31, S101, and S141 each carry phosphoserine. The tract at residues 124–145 is disordered; it reads AQAPPKPPRLHLETPQASPQEA.

It belongs to the BORG/CEP family. As to quaternary structure, interacts with CDC42 and RHOQ, in a GTP-dependent manner, and with SEPT7.

The protein localises to the endomembrane system. It localises to the cytoplasm. Its subcellular location is the cytoskeleton. Its function is as follows. Probably involved in the organization of the actin cytoskeleton. May act downstream of CDC42 to induce actin filament assembly leading to cell shape changes. Induces pseudopodia formation in fibroblasts in a CDC42-dependent manner. In Bos taurus (Bovine), this protein is Cdc42 effector protein 2 (CDC42EP2).